The primary structure comprises 108 residues: DNA-directed RNA polymerase subunit omega (108 aa).

It belongs to the RNA polymerase subunit omega family. The RNAP catalytic core consists of 2 alpha, 1 beta, 1 beta' and 1 omega subunit. When a sigma factor is associated with the core the holoenzyme is formed, which can initiate transcription.

The enzyme catalyses RNA(n) + a ribonucleoside 5'-triphosphate = RNA(n+1) + diphosphate. In terms of biological role, promotes RNA polymerase assembly. Latches the N- and C-terminal regions of the beta' subunit thereby facilitating its interaction with the beta and alpha subunits. This is DNA-directed RNA polymerase subunit omega from Mycolicibacterium paratuberculosis (strain ATCC BAA-968 / K-10) (Mycobacterium paratuberculosis).